A 448-amino-acid polypeptide reads, in one-letter code: Neurexin-1b-beta (448 aa).

The first 38 residues, 1–38, serve as a signal peptide directing secretion; sequence MFGGWRLVVWQIFSEIITRRLGFWICLYFAALSVGMIS. Topologically, residues 39-375 are extracellular; it reads GSEPLVRTRH…EVFRESNGTT (337 aa). The 199-residue stretch at 71–269 folds into the Laminin G-like domain; it reads STYVFGRQGG…DPNVRMEGSV (199 aa). A helical transmembrane segment spans residues 376–396; that stretch reads GMVVGIVAGAALCILILLYAM. Over 397-448 the chain is Cytoplasmic; that stretch reads YKYRNRDEGSYHVDESRNYICNSNGAALKEKNTADDDSGSKSKKNKNKEYYV. Residues 426–436 show a composition bias toward basic and acidic residues; sequence EKNTADDDSGS. Positions 426–448 are disordered; that stretch reads EKNTADDDSGSKSKKNKNKEYYV.

This sequence belongs to the neurexin family.

The protein localises to the membrane. Its function is as follows. Neuronal cell surface protein that may be involved in cell recognition and cell adhesion. May play a role in formation or maintenance of synaptic junctions. This is Neurexin-1b-beta (nrxn1b) from Danio rerio (Zebrafish).